Consider the following 134-residue polypeptide: Small ribosomal subunit protein uS8c (134 aa).

It belongs to the universal ribosomal protein uS8 family. As to quaternary structure, part of the 30S ribosomal subunit.

It is found in the plastid. It localises to the chloroplast. Functionally, one of the primary rRNA binding proteins, it binds directly to 16S rRNA central domain where it helps coordinate assembly of the platform of the 30S subunit. This is Small ribosomal subunit protein uS8c (rps8) from Vitis vinifera (Grape).